The sequence spans 296 residues: Inactive uridine phosphorylase B (296 aa).

The protein belongs to the PNP/UDP phosphorylase family. In terms of assembly, homodimer.

The protein is Inactive uridine phosphorylase B of Schistosoma mansoni (Blood fluke).